Here is a 190-residue protein sequence, read N- to C-terminus: MFQVPDSEGGRAGSRAMKPPGGESSNLFGSPEEATPSSRPNRMASNIFGPTEEPQNIPKRTNPPGGKGSGIFDESTPVQTRQHLNPPGGKTSDIFGSPVTATSRLAHPNKPKDHVFLCEGEEPKSDLKAARSIPAGAEPGEKGSARKAGPAKEQEPMPTVDSHEPRLGPRPRSHNKVLNPPGGKSSISFY.

Methionine 1 is subject to N-acetylmethionine. Residues 1 to 190 form a disordered region; that stretch reads MFQVPDSEGG…PGGKSSISFY (190 aa). Phosphoserine is present on serine 30. The residue at position 35 (threonine 35) is a Phosphothreonine. A compositionally biased stretch (polar residues) spans 35-44; sequence TPSSRPNRMA. 3 positions are modified to phosphoserine: serine 45, serine 69, and serine 97. The span at 110–129 shows a compositional bias: basic and acidic residues; the sequence is KPKDHVFLCEGEEPKSDLKA. Phosphoserine occurs at positions 132 and 144. A compositionally biased stretch (basic and acidic residues) spans 139–167; the sequence is PGEKGSARKAGPAKEQEPMPTVDSHEPRL.

The protein belongs to the JUPITER family. In terms of assembly, monomer. Dimer. Interacts with TPCN1. In terms of tissue distribution, expressed in liver, kidney, prostate, testis and uterus.

The protein resides in the cytoplasm. It is found in the nucleus. Its function is as follows. Nicotinic acid adenine dinucleotide phosphate (NAADP) binding protein required for NAADP-evoked intracellular calcium release. Confers NAADP-sensitivity to the two pore channels (TPCs) complex. Enables NAADP to activate Ca(2+) release from the endoplasmic reticulum through ryanodine receptors. (Microbial infection) Involved in the endolysosomal trafficking of human coronavirus SARS-CoV-2. The protein is Jupiter microtubule associated homolog 2 of Homo sapiens (Human).